Here is a 126-residue protein sequence, read N- to C-terminus: Large ribosomal subunit protein bL19 (126 aa).

This sequence belongs to the bacterial ribosomal protein bL19 family.

This protein is located at the 30S-50S ribosomal subunit interface and may play a role in the structure and function of the aminoacyl-tRNA binding site. The chain is Large ribosomal subunit protein bL19 from Prochlorococcus marinus (strain MIT 9312).